The following is a 1488-amino-acid chain: Chromosome partition protein MukB (1488 aa).

Residue 34-41 (GGNGAGKS) participates in ATP binding. 3 coiled-coil regions span residues 326 to 413 (LEAD…QTRA), 444 to 472 (LDTF…QTAH), and 509 to 602 (RHLA…RRAP). The interval 666 to 783 (PGGAEDQRLN…SLPIFGRAAR (118 aa)) is flexible hinge. Coiled-coil stretches lie at residues 835 to 923 (EAEI…AKLE), 977 to 1116 (EMLS…AKAG), and 1209 to 1265 (VEAI…LQSV).

Belongs to the SMC family. MukB subfamily. As to quaternary structure, homodimerization via its hinge domain. Binds to DNA via its C-terminal region. Interacts, and probably forms a ternary complex, with MukE and MukF via its C-terminal region. The complex formation is stimulated by calcium or magnesium. Interacts with tubulin-related protein FtsZ.

The protein resides in the cytoplasm. It localises to the nucleoid. In terms of biological role, plays a central role in chromosome condensation, segregation and cell cycle progression. Functions as a homodimer, which is essential for chromosome partition. Involved in negative DNA supercoiling in vivo, and by this means organize and compact chromosomes. May achieve or facilitate chromosome segregation by condensation DNA from both sides of a centrally located replisome during cell division. The protein is Chromosome partition protein MukB of Salmonella paratyphi C (strain RKS4594).